The primary structure comprises 380 residues: Glucose-1-phosphate adenylyltransferase (380 aa).

Residues Gly-164, 179-180 (EK), and Ser-190 contribute to the alpha-D-glucose 1-phosphate site.

It belongs to the bacterial/plant glucose-1-phosphate adenylyltransferase family. As to quaternary structure, homotetramer.

The catalysed reaction is alpha-D-glucose 1-phosphate + ATP + H(+) = ADP-alpha-D-glucose + diphosphate. The protein operates within glycan biosynthesis; glycogen biosynthesis. In terms of biological role, involved in the biosynthesis of ADP-glucose, a building block required for the elongation reactions to produce glycogen. Catalyzes the reaction between ATP and alpha-D-glucose 1-phosphate (G1P) to produce pyrophosphate and ADP-Glc. The polypeptide is Glucose-1-phosphate adenylyltransferase (Lactococcus lactis subsp. cremoris (strain MG1363)).